The chain runs to 286 residues: UDP-3-O-acyl-N-acetylglucosamine deacetylase (286 aa).

Zn(2+)-binding residues include His-79, His-237, and Asp-241. The active-site Proton donor is His-264.

It belongs to the LpxC family. It depends on Zn(2+) as a cofactor.

The catalysed reaction is a UDP-3-O-[(3R)-3-hydroxyacyl]-N-acetyl-alpha-D-glucosamine + H2O = a UDP-3-O-[(3R)-3-hydroxyacyl]-alpha-D-glucosamine + acetate. It participates in glycolipid biosynthesis; lipid IV(A) biosynthesis; lipid IV(A) from (3R)-3-hydroxytetradecanoyl-[acyl-carrier-protein] and UDP-N-acetyl-alpha-D-glucosamine: step 2/6. Catalyzes the hydrolysis of UDP-3-O-myristoyl-N-acetylglucosamine to form UDP-3-O-myristoylglucosamine and acetate, the committed step in lipid A biosynthesis. The chain is UDP-3-O-acyl-N-acetylglucosamine deacetylase from Brucella melitensis biotype 2 (strain ATCC 23457).